A 292-amino-acid polypeptide reads, in one-letter code: NAD kinase (292 aa).

D73 serves as the catalytic Proton acceptor. NAD(+) is bound by residues 73 to 74, 147 to 148, H158, R175, D177, 188 to 193, and Q247; these read DG, NE, and TAYSLS.

The protein belongs to the NAD kinase family. A divalent metal cation serves as cofactor.

The protein resides in the cytoplasm. It catalyses the reaction NAD(+) + ATP = ADP + NADP(+) + H(+). Involved in the regulation of the intracellular balance of NAD and NADP, and is a key enzyme in the biosynthesis of NADP. Catalyzes specifically the phosphorylation on 2'-hydroxyl of the adenosine moiety of NAD to yield NADP. The sequence is that of NAD kinase from Shigella dysenteriae serotype 1 (strain Sd197).